Consider the following 349-residue polypeptide: Phosphate acyltransferase (349 aa).

This sequence belongs to the PlsX family. As to quaternary structure, homodimer. Probably interacts with PlsY.

It is found in the cytoplasm. The enzyme catalyses a fatty acyl-[ACP] + phosphate = an acyl phosphate + holo-[ACP]. It participates in lipid metabolism; phospholipid metabolism. Catalyzes the reversible formation of acyl-phosphate (acyl-PO(4)) from acyl-[acyl-carrier-protein] (acyl-ACP). This enzyme utilizes acyl-ACP as fatty acyl donor, but not acyl-CoA. In Colwellia psychrerythraea (strain 34H / ATCC BAA-681) (Vibrio psychroerythus), this protein is Phosphate acyltransferase.